The chain runs to 221 residues: Probable septum site-determining protein MinC (221 aa).

It belongs to the MinC family. In terms of assembly, interacts with MinD and FtsZ.

Cell division inhibitor that blocks the formation of polar Z ring septums. Rapidly oscillates between the poles of the cell to destabilize FtsZ filaments that have formed before they mature into polar Z rings. Prevents FtsZ polymerization. The polypeptide is Probable septum site-determining protein MinC (Shewanella sp. (strain MR-7)).